Consider the following 223-residue polypeptide: MDTPFIITLDGPAGVGKSTLAKRLADRFEIAYLDTGAMFRGTAWKLGEGAWDWDADKLDQALKGLEFTLSGSGSNSTLSLNGTHLTDEIRTETVGMWASNMAKIPAVREYQKIAQRAIGETTSLIAEGRDMGTVIFPQAPCKFFLDADLEERAHRRFEQLKDMGKPADMAELIEQIAARDDQDRNRKVAPLKPAEDSIIVDTTHLDINGVFDKLVFETEKKVN.

11-19 (GPAGVGKST) lines the ATP pocket.

Belongs to the cytidylate kinase family. Type 1 subfamily.

The protein localises to the cytoplasm. It carries out the reaction CMP + ATP = CDP + ADP. It catalyses the reaction dCMP + ATP = dCDP + ADP. In Maridesulfovibrio salexigens (strain ATCC 14822 / DSM 2638 / NCIMB 8403 / VKM B-1763) (Desulfovibrio salexigens), this protein is Cytidylate kinase.